Reading from the N-terminus, the 88-residue chain is MVRIRLQRMGSKFNPFYKIVVADARAPRDGRFIEALGYYNPQQKFAKVNLEKTYRWLHIGAQVTQTVRNIFSKKGVFKNFLEQKSSRA.

This sequence belongs to the bacterial ribosomal protein bS16 family.

The chain is Small ribosomal subunit protein bS16 from Mesomycoplasma hyopneumoniae (strain 232) (Mycoplasma hyopneumoniae).